A 3681-amino-acid chain; its full sequence is E3 ubiquitin-protein ligase UPL1 (3681 aa).

Residues Asp-882–Ser-891 show a composition bias toward basic and acidic residues. Residues Asp-882–Asn-912 are disordered. Residues Asp-892 to Thr-901 show a composition bias toward low complexity. A UBA domain is found at Gln-1269–Asn-1310. The 20-residue stretch at Gln-1316 to Thr-1335 folds into the UIM domain. Disordered stretches follow at residues Ser-1332–Pro-1358, Met-1768–Ile-1802, Glu-2015–Glu-2094, Glu-2125–Asp-2151, Arg-2253–Val-2287, Asn-2401–Glu-2435, Pro-2483–Pro-2505, Ile-2537–Val-2606, Ser-2975–Ser-3003, and Thr-3228–Gly-3254. 3 stretches are compositionally biased toward basic and acidic residues: residues Pro-1336–Val-1345, Lys-1782–Ile-1802, and Leu-2017–His-2037. Positions Gly-2038–Met-2087 are enriched in polar residues. Residues Asp-2130–Asp-2151 are compositionally biased toward acidic residues. Residues Arg-2253–Ser-2265 show a composition bias toward basic and acidic residues. Positions Arg-2277–Val-2287 are enriched in polar residues. A Phosphoserine modification is found at Ser-2598. Positions Glu-2982–Glu-3002 are enriched in basic and acidic residues. Residues Ala-3237–Asp-3247 are compositionally biased toward polar residues. The HECT domain occupies Ser-3340–Ala-3681. The active-site Glycyl thioester intermediate is Cys-3648.

The protein belongs to the UPL family. TOM1/PTR1 subfamily. In terms of tissue distribution, widely expressed. Expressed in root, stem, cauline and rosette leaf, seedling and flower (at protein level).

The enzyme catalyses S-ubiquitinyl-[E2 ubiquitin-conjugating enzyme]-L-cysteine + [acceptor protein]-L-lysine = [E2 ubiquitin-conjugating enzyme]-L-cysteine + N(6)-ubiquitinyl-[acceptor protein]-L-lysine.. It participates in protein modification; protein ubiquitination. In terms of biological role, probable E3 ubiquitin-protein ligase which mediates ubiquitination and subsequent proteasomal degradation of target proteins. The protein is E3 ubiquitin-protein ligase UPL1 (UPL1) of Arabidopsis thaliana (Mouse-ear cress).